Consider the following 182-residue polypeptide: Putative lipoprotein LpqE (182 aa).

The first 29 residues, 1 to 29 (MNRCNIRLRLAGMTTWVASIALLAAALSG), serve as a signal peptide directing secretion. Cys-30 is lipidated: N-palmitoyl cysteine. The S-diacylglycerol cysteine moiety is linked to residue Cys-30.

It is found in the cell membrane. This chain is Putative lipoprotein LpqE (lpqE), found in Mycobacterium bovis (strain ATCC BAA-935 / AF2122/97).